Reading from the N-terminus, the 73-residue chain is DNA-directed RNA polymerase subunit omega (73 aa).

Belongs to the RNA polymerase subunit omega family. As to quaternary structure, the RNAP catalytic core consists of 2 alpha, 1 beta, 1 beta' and 1 omega subunit. When a sigma factor is associated with the core the holoenzyme is formed, which can initiate transcription.

It catalyses the reaction RNA(n) + a ribonucleoside 5'-triphosphate = RNA(n+1) + diphosphate. Functionally, promotes RNA polymerase assembly. Latches the N- and C-terminal regions of the beta' subunit thereby facilitating its interaction with the beta and alpha subunits. This chain is DNA-directed RNA polymerase subunit omega, found in Oleidesulfovibrio alaskensis (strain ATCC BAA-1058 / DSM 17464 / G20) (Desulfovibrio alaskensis).